The primary structure comprises 421 residues: Histidine--tRNA ligase (421 aa).

It belongs to the class-II aminoacyl-tRNA synthetase family. Homodimer.

It is found in the cytoplasm. It carries out the reaction tRNA(His) + L-histidine + ATP = L-histidyl-tRNA(His) + AMP + diphosphate + H(+). This Francisella tularensis subsp. holarctica (strain FTNF002-00 / FTA) protein is Histidine--tRNA ligase.